The sequence spans 438 residues: MTKPVVAIVGRPNVGKSTLFNRILGRQAAVVDAEPGVTRDRLYQEVDWAGRHFILVDTGGIESQAGEDMANRVFDQVRRAMAEAQLILYVLDGNAGLLEEDVQVAALLRRSSKPVLVVVNKVDDFSRPLPLADFYRLGLGEPVPVSAAQGLNIGDLLDLVVAGMPAGADEPRSEPVRIAVVGRPNVGKSSLVNAILGEERVIVSDVPGTTRDAVDTLFRRDGREYVFIDTAGMRRKARIRESIEYYSVLRAKKALERSDLALVVLDFTDGVTNQDQRIAGLAEEAGKGTIIVVNKWDLAEGSGVSASRYQEEVRRELIFIGYAPVLCVSAVSGLGVPKILDTVESVMGEYRRQIPTSMLNRILQDAFMISPPPARKGKRLKLMYCTQVATGPPAFLLFVNDPGLVSPGYRRYLENEVRRALGFKGVPVRILFRRRESK.

2 EngA-type G domains span residues P4–A168 and V176–R351. Residues G10–S17, D57–I61, N120–D123, G182–S189, D229–M233, and N294–D297 each bind GTP. The KH-like domain maps to R352–E436.

Belongs to the TRAFAC class TrmE-Era-EngA-EngB-Septin-like GTPase superfamily. EngA (Der) GTPase family. Associates with the 50S ribosomal subunit.

In terms of biological role, GTPase that plays an essential role in the late steps of ribosome biogenesis. This chain is GTPase Der, found in Desulforudis audaxviator (strain MP104C).